The chain runs to 73 residues: Sec-independent protein translocase protein TatA (73 aa).

A helical membrane pass occupies residues 1–21 (MGSFSIGHWLIVLAIIVLLFG). A disordered region spans residues 43–73 (MEDTTPEKSEKVEHKEESATSQKIEETTKNA).

The protein belongs to the TatA/E family. The Tat system comprises two distinct complexes: a TatABC complex, containing multiple copies of TatA, TatB and TatC subunits, and a separate TatA complex, containing only TatA subunits. Substrates initially bind to the TatABC complex, which probably triggers association of the separate TatA complex to form the active translocon.

It is found in the cell inner membrane. Functionally, part of the twin-arginine translocation (Tat) system that transports large folded proteins containing a characteristic twin-arginine motif in their signal peptide across membranes. TatA could form the protein-conducting channel of the Tat system. This is Sec-independent protein translocase protein TatA from Campylobacter concisus (strain 13826).